The sequence spans 395 residues: MGIKHLYQVIQENAPDAVKAGEIKNHFGRKVAIDASMSIYSFLVAVRSDGQQLMSETGETTSHLMGMFYRTLRIVENGIKPVYVFDGAPPKLKSGELAKRFMRKSEAAEAHEEAKEVGTAEDVEKFSRRTVRVTREHNEECKKLLKLMGVPYINAPTEAEAQCAVLARAGKVYAAASEDMDTLCFDSPILLRHLTFSEQRKEPILEIHLDRVLEGLDMDRKQFVDLCILLGCDYLDPIPKVGPNTALKLIRDHGSLEKVVEAIQSDPKKKYTIPEDWPYKDARELFFDPDVRKADHPDCNFKWEAPDVEGLVKFLVEEKAFSEDRVRNGAARLQKNLKTAQQSRLEGFFKPIAKTEQEKATLKRKHEEKLELQKKKKKEEAKAKKEAKSKPRGAV.

The N-domain stretch occupies residues 1 to 104; the sequence is MGIKHLYQVI…GELAKRFMRK (104 aa). Residue aspartate 34 participates in Mg(2+) binding. Arginine 47 and arginine 70 together coordinate DNA. Mg(2+) contacts are provided by aspartate 86, glutamate 158, glutamate 160, aspartate 179, and aspartate 181. The segment at 122–253 is I-domain; sequence DVEKFSRRTV…NTALKLIRDH (132 aa). Glutamate 158 is a binding site for DNA. DNA-binding residues include glycine 231 and aspartate 233. Aspartate 233 provides a ligand contact to Mg(2+). An interaction with PCNA region spans residues 341 to 349; that stretch reads QQSRLEGFF. A compositionally biased stretch (basic and acidic residues) spans 357–389; that stretch reads QEKATLKRKHEEKLELQKKKKKEEAKAKKEAKS. The segment at 357–395 is disordered; it reads QEKATLKRKHEEKLELQKKKKKEEAKAKKEAKSKPRGAV.

Belongs to the XPG/RAD2 endonuclease family. FEN1 subfamily. As to quaternary structure, interacts with PCNA. Three molecules of FEN1 bind to one PCNA trimer with each molecule binding to one PCNA monomer. PCNA stimulates the nuclease activity without altering cleavage specificity. Mg(2+) is required as a cofactor. Post-translationally, phosphorylated. Phosphorylation upon DNA damage induces relocalization to the nuclear plasma.

Its subcellular location is the nucleus. It is found in the nucleolus. The protein resides in the nucleoplasm. The protein localises to the mitochondrion. Functionally, structure-specific nuclease with 5'-flap endonuclease and 5'-3' exonuclease activities involved in DNA replication and repair. During DNA replication, cleaves the 5'-overhanging flap structure that is generated by displacement synthesis when DNA polymerase encounters the 5'-end of a downstream Okazaki fragment. It enters the flap from the 5'-end and then tracks to cleave the flap base, leaving a nick for ligation. Also involved in the long patch base excision repair (LP-BER) pathway, by cleaving within the apurinic/apyrimidinic (AP) site-terminated flap. Acts as a genome stabilization factor that prevents flaps from equilibrating into structures that lead to duplications and deletions. Also possesses 5'-3' exonuclease activity on nicked or gapped double-stranded DNA, and exhibits RNase H activity. Also involved in replication and repair of rDNA and in repairing mitochondrial DNA. This chain is Flap endonuclease 1, found in Ajellomyces dermatitidis (strain ER-3 / ATCC MYA-2586) (Blastomyces dermatitidis).